The following is a 298-amino-acid chain: Oxidoreductase YdhF (298 aa).

The Proton donor role is filled by tyrosine 55. Residues 158-159 (SN), 209-220 (WSCLGGGRLFND), and 263-264 (SG) contribute to the NADP(+) site.

Belongs to the aldo/keto reductase family. Aldo/keto reductase 2 subfamily.

May function as oxidoreductase. The chain is Oxidoreductase YdhF (ydhF) from Escherichia coli (strain K12).